A 247-amino-acid polypeptide reads, in one-letter code: 2,3-bisphosphoglycerate-dependent phosphoglycerate mutase (247 aa).

Substrate-binding positions include 7–14 (RHGESEWN), 20–21 (TG), Arg59, 86–89 (ERHY), Lys97, 113–114 (RR), and 182–183 (GN). His8 acts as the Tele-phosphohistidine intermediate in catalysis. Residue Glu86 is the Proton donor/acceptor of the active site.

This sequence belongs to the phosphoglycerate mutase family. BPG-dependent PGAM subfamily.

It catalyses the reaction (2R)-2-phosphoglycerate = (2R)-3-phosphoglycerate. The protein operates within carbohydrate degradation; glycolysis; pyruvate from D-glyceraldehyde 3-phosphate: step 3/5. Catalyzes the interconversion of 2-phosphoglycerate and 3-phosphoglycerate. The polypeptide is 2,3-bisphosphoglycerate-dependent phosphoglycerate mutase (Treponema denticola (strain ATCC 35405 / DSM 14222 / CIP 103919 / JCM 8153 / KCTC 15104)).